The sequence spans 409 residues: Forkhead box protein A2 (409 aa).

The fork-head DNA-binding region spans 150-241; the sequence is AKPPYSYISL…GNMFENGCYL (92 aa). Basic and acidic residues predominate over residues 250–262; sequence DKKLSKDPSRKTS. Residues 250–315 are disordered; that stretch reads DKKLSKDPSR…AASPTSQAQH (66 aa). Over residues 263-286 the composition is skewed to low complexity; that stretch reads EGGSNSSSESCNGNESPHSNSSSN.

Its subcellular location is the nucleus. Its function is as follows. May play a crucial role in specification of both the axial mesendoderm and the ventral nervous system. The chain is Forkhead box protein A2 (foxa2) from Danio rerio (Zebrafish).